The primary structure comprises 72 residues: Translation initiation factor IF-1 (72 aa).

Positions 1-72 (MAREDLIEVE…SRGRITYRKK (72 aa)) constitute an S1-like domain.

The protein belongs to the IF-1 family. Component of the 30S ribosomal translation pre-initiation complex which assembles on the 30S ribosome in the order IF-2 and IF-3, IF-1 and N-formylmethionyl-tRNA(fMet); mRNA recruitment can occur at any time during PIC assembly.

Its subcellular location is the cytoplasm. Its function is as follows. One of the essential components for the initiation of protein synthesis. Stabilizes the binding of IF-2 and IF-3 on the 30S subunit to which N-formylmethionyl-tRNA(fMet) subsequently binds. Helps modulate mRNA selection, yielding the 30S pre-initiation complex (PIC). Upon addition of the 50S ribosomal subunit IF-1, IF-2 and IF-3 are released leaving the mature 70S translation initiation complex. The polypeptide is Translation initiation factor IF-1 (Acholeplasma laidlawii (strain PG-8A)).